The sequence spans 301 residues: Protoheme IX farnesyltransferase 2 (301 aa).

The next 9 membrane-spanning stretches (helical) occupy residues 29–49, 51–71, 101–121, 123–143, 150–170, 177–197, 223–243, 244–264, and 281–301; these read VVALMLLTVLVGMCLAVPTAV, VQPLIAGMFGIALMAGSAAAL, ALIFAASIGGLGFVVLYVLVN, LTAWLTFASLIGYALVYTAYL, NIVIGGLAGAMPPLLGWTAVT, ALLLVIIIFTWTPPHFWALAI, CILLYTVLLAIACLLPVLVGM, CGPMYFVCSSLLSSVFIYKAW, and FSIYHLMLLFMALLIDHYLWS.

Belongs to the UbiA prenyltransferase family. Protoheme IX farnesyltransferase subfamily.

It localises to the cell inner membrane. The catalysed reaction is heme b + (2E,6E)-farnesyl diphosphate + H2O = Fe(II)-heme o + diphosphate. The protein operates within porphyrin-containing compound metabolism; heme O biosynthesis; heme O from protoheme: step 1/1. Its function is as follows. Converts heme B (protoheme IX) to heme O by substitution of the vinyl group on carbon 2 of heme B porphyrin ring with a hydroxyethyl farnesyl side group. The protein is Protoheme IX farnesyltransferase 2 of Shewanella sp. (strain W3-18-1).